We begin with the raw amino-acid sequence, 131 residues long: D-ribose pyranase (131 aa).

The Proton donor role is filled by His-20. Substrate contacts are provided by residues Asp-28, His-98, and 120-122 (YSN).

It belongs to the RbsD / FucU family. RbsD subfamily. As to quaternary structure, homodecamer.

It localises to the cytoplasm. The enzyme catalyses beta-D-ribopyranose = beta-D-ribofuranose. The protein operates within carbohydrate metabolism; D-ribose degradation; D-ribose 5-phosphate from beta-D-ribopyranose: step 1/2. In terms of biological role, catalyzes the interconversion of beta-pyran and beta-furan forms of D-ribose. In Lactobacillus johnsonii (strain CNCM I-12250 / La1 / NCC 533), this protein is D-ribose pyranase.